Here is a 28-residue protein sequence, read N- to C-terminus: uncharacterized protein (28 aa).

This is an uncharacterized protein from Spiroplasma virus 4 (SpV4).